The following is a 393-amino-acid chain: Heparan sulfate glucosamine 3-O-sulfotransferase 3A1 (393 aa).

Residues 1–24 (MAPSGPTGAQPSPAEPLSRSIFRK) lie on the Cytoplasmic side of the membrane. Residues 25–43 (FLLMLCSLLTSLYVFYCLA) form a helical; Signal-anchor for type II membrane protein membrane-spanning segment. The Lumenal portion of the chain corresponds to 44–393 (ERCPPGSGPV…MTGRDFGWDG (350 aa)). Positions 85-121 (QRRRRGRSGPGDSSDQEEQSPGLAAAPGGSGAGSSVA) are disordered. Residue 149–153 (KGGTR) coordinates 3'-phosphoadenylyl sulfate. Residues 171–177 (EPHFFDR) and 202–205 (KTPS) each bind substrate. Residues Arg230 and Ser238 each coordinate 3'-phosphoadenylyl sulfate. Residue Asn260 is glycosylated (N-linked (GlcNAc...) asparagine). 270–271 (WS) contacts substrate. An N-linked (GlcNAc...) asparagine glycan is attached at Asn331. Cys338 and Cys350 are oxidised to a cystine. 355 to 359 (KGRAH) is a binding site for 3'-phosphoadenylyl sulfate.

This sequence belongs to the sulfotransferase 1 family.

The protein localises to the golgi apparatus membrane. It catalyses the reaction alpha-D-glucosaminyl-[heparan sulfate](n) + 3'-phosphoadenylyl sulfate = 3-sulfo-alpha-D-glucosaminyl-[heparan sulfate](n) + adenosine 3',5'-bisphosphate + H(+). Its function is as follows. Sulfotransferase that utilizes 3'-phospho-5'-adenylyl sulfate (PAPS) to catalyze the transfer of a sulfo group to an N-unsubstituted glucosamine linked to a 2-O-sulfo iduronic acid unit on heparan sulfate. Catalyzes the O-sulfation of glucosamine in IdoUA2S-GlcNS and also in IdoUA2S-GlcNH2. Unlike HS3ST1/3-OST-1, does not convert non-anticoagulant heparan sulfate to anticoagulant heparan sulfate. The protein is Heparan sulfate glucosamine 3-O-sulfotransferase 3A1 (Hs3st3a1) of Mus musculus (Mouse).